The chain runs to 39 residues: Conotoxin Cl14.7 (39 aa).

Positions 1 to 15 (MGDLSEADSMKHQLQ) are excised as a propeptide.

Post-translationally, contains 2 disulfide bonds. As to expression, expressed by the venom duct.

Its subcellular location is the secreted. The protein is Conotoxin Cl14.7 of Californiconus californicus (California cone).